The following is a 731-amino-acid chain: Beta-galactosidase (731 aa).

The first 23 residues, methionine 1–serine 23, serve as a signal peptide directing secretion. The active-site Proton donor is glutamate 182. Glutamate 251 (nucleophile) is an active-site residue. N-linked (GlcNAc...) asparagine glycosylation is present at asparagine 459.

This sequence belongs to the glycosyl hydrolase 35 family.

It localises to the secreted. The protein resides in the extracellular space. The protein localises to the apoplast. It catalyses the reaction Hydrolysis of terminal non-reducing beta-D-galactose residues in beta-D-galactosides.. Involved in cell wall degradation. Degrades polysaccharides containing beta-(1--&gt;4)-linked galactans, acting as an exo-(1--&gt;4)-beta-D-galactanase. The chain is Beta-galactosidase from Malus domestica (Apple).